We begin with the raw amino-acid sequence, 1146 residues long: Probable transport protein MmpL12 (1146 aa).

11 consecutive transmembrane segments (helical) span residues 25-45 (LIVIGCWIAVAAALTLLLPTL), 206-226 (VSVLIILILVYRNLVTMLVPL), 254-274 (AIVFMSAVMIGAGTDYAVFLI), 298-318 (IGKVITASAATVAVTFLAMVF), 330-350 (AIAVAITVSLLGAVTLLPAIL), 382-402 (TIHLVGSLIVLVALAGCTLLI), 826-846 (FIVIATIVIVFLILVILLRAL), 850-870 (IYLIGSVLISYLSALGIGTLV), 883-903 (LPGLSFILLVAIGADYNMLLI), 928-948 (VITSAGLIFAASMFGLVGASI), and 949-969 (NTMAQAGFTIGIGIVLDTFLV).

This sequence belongs to the resistance-nodulation-cell division (RND) (TC 2.A.6) family. MmpL subfamily.

The protein resides in the cell membrane. The protein is Probable transport protein MmpL12 (mmpL12) of Mycobacterium tuberculosis (strain CDC 1551 / Oshkosh).